Consider the following 312-residue polypeptide: MNKIIILIALSLFSSSIWAGTSAHALSQQGYTQTRYPIVLVHGLFGFDTLAGMDYFHGIPQSLTRDGAQVYVAQVSATNSSERRGEQLLAQVESLLAVTGAKKVNLIGHSHGGPTIRYVASVRPDLVASVTSIGGVHKGSAVADLVRGVIPSGSVSEQVAVGLTQGLVALIDLLSGGKAHPQDPLASLAALTTEGSLKFNQYYPEGVPTSACGEGAYQVNGVRYYSWSGAATVTNILDPSDVAMGLIGLVFNEPNDGLVATCSTHLGKVIRDDYRMNHLDEINGLLGIHSLFETDPVTLYRQHANRLKQAGL.

A signal peptide spans 1-25 (MNKIIILIALSLFSSSIWAGTSAHA). Positions 37–228 (PIVLVHGLFG…VNGVRYYSWS (192 aa)) constitute an AB hydrolase-1 domain. Leucine 44 contacts substrate. Serine 110 acts as the Nucleophile in catalysis. Residue histidine 111 coordinates substrate. Cysteine 212 and cysteine 262 are disulfide-bonded. Aspartate 238 contacts Ca(2+). Residues aspartate 256 and histidine 278 each act as charge relay system in the active site. Positions 280, 284, and 288 each coordinate Ca(2+).

This sequence belongs to the AB hydrolase superfamily. Pseudomonas lipase family. In terms of assembly, monomer. The cofactor is Ca(2+).

Its subcellular location is the secreted. The catalysed reaction is a triacylglycerol + H2O = a diacylglycerol + a fatty acid + H(+). In terms of biological role, catalyzes the hydrolysis of triacylglycerol. This is Triacylglycerol lipase from Vibrio cholerae serotype O1 (strain ATCC 39315 / El Tor Inaba N16961).